We begin with the raw amino-acid sequence, 266 residues long: Vitamin B12-binding protein (266 aa).

The N-terminal stretch at 1–22 (MAKSLFRALVALSFLAPLWLNA) is a signal peptide. Residues 25-266 (RVITLSPANT…QLCNALSQVD (242 aa)) form the Fe/B12 periplasmic-binding domain. Cyanocob(III)alamin-binding positions include Tyr50 and 242–246 (DWFER). Cysteines 183 and 259 form a disulfide.

Belongs to the BtuF family. The complex is composed of two ATP-binding proteins (BtuD), two transmembrane proteins (BtuC) and a solute-binding protein (BtuF).

The protein resides in the periplasm. Functionally, part of the ABC transporter complex BtuCDF involved in vitamin B12 import. Binds vitamin B12 and delivers it to the periplasmic surface of BtuC. This Shigella flexneri protein is Vitamin B12-binding protein.